We begin with the raw amino-acid sequence, 176 residues long: uncharacterized protein (176 aa).

This is an uncharacterized protein from Caenorhabditis elegans.